The following is a 144-amino-acid chain: uncharacterized protein (144 aa).

The next 4 helical transmembrane spans lie at 7–29 (FPAS…RDLV), 51–73 (VAIG…FLLV), 85–107 (AVLA…VGAF), and 122–139 (HLHH…LIFV).

The protein localises to the cell membrane. This is an uncharacterized protein from Treponema pallidum (strain Nichols).